A 355-amino-acid chain; its full sequence is Phenylalanine--tRNA ligase alpha subunit (355 aa).

Glutamate 273 lines the Mg(2+) pocket.

It belongs to the class-II aminoacyl-tRNA synthetase family. Phe-tRNA synthetase alpha subunit type 1 subfamily. Tetramer of two alpha and two beta subunits. Mg(2+) serves as cofactor.

The protein localises to the cytoplasm. It catalyses the reaction tRNA(Phe) + L-phenylalanine + ATP = L-phenylalanyl-tRNA(Phe) + AMP + diphosphate + H(+). This chain is Phenylalanine--tRNA ligase alpha subunit, found in Bifidobacterium animalis subsp. lactis (strain AD011).